The sequence spans 535 residues: Inositol 1,4,5-trisphosphate receptor-interacting protein-like 2 (535 aa).

Residues 1-38 (MSVHYTLNLRVFWPLVTGLCTALVCLYHVLRGSGGARA) form the signal peptide. Residues 39–43 (EPADG) lie on the Extracellular side of the membrane. A helical transmembrane segment spans residues 44 to 64 (VDGGFPLLKVAVLLLLSYVLL). Residues 65-535 (RCRHAVRQRF…RTQGFLEGEP (471 aa)) are Cytoplasmic-facing. S139 carries the phosphoserine modification.

This sequence belongs to the ITPRIP family.

It is found in the membrane. This is Inositol 1,4,5-trisphosphate receptor-interacting protein-like 2 (ITPRIPL2) from Homo sapiens (Human).